The primary structure comprises 290 residues: Arylamine N-acetyltransferase 1 (290 aa).

Met1 is modified (N-acetylmethionine). Position 103 (Ser103) interacts with CoA. Ile106 to His107 lines the substrate pocket. Residue Tyr208 participates in CoA binding.

It belongs to the arylamine N-acetyltransferase family.

It localises to the cytoplasm. The catalysed reaction is an arylamine + acetyl-CoA = an N-acetylarylamine + CoA. In terms of biological role, participates in the detoxification of a plethora of hydrazine and arylamine drugs. This Bos taurus (Bovine) protein is Arylamine N-acetyltransferase 1 (NAT1).